Here is a 439-residue protein sequence, read N- to C-terminus: Ribulose bisphosphate carboxylase/oxygenase activase, chloroplastic (439 aa).

Residue 167 to 174 (GGKGQGKS) coordinates ATP.

It belongs to the RuBisCO activase family.

It localises to the plastid. The protein resides in the chloroplast stroma. Activation of RuBisCO (ribulose-1,5-bisphosphate carboxylase/oxygenase; EC 4.1.1.39) involves the ATP-dependent carboxylation of the epsilon-amino group of lysine leading to a carbamate structure. The chain is Ribulose bisphosphate carboxylase/oxygenase activase, chloroplastic (RCA) from Vigna radiata var. radiata (Mung bean).